The sequence spans 609 residues: Alpha-glucosides permease MPH2 (609 aa).

Residues 1–106 (MKNLSFLINR…AAAWSLLVST (106 aa)) lie on the Cytoplasmic side of the membrane. The chain crosses the membrane as a helical span at residues 107–127 (TLIMEGYDTAILGAFYALPIF). Residues 128–142 (QRKFGSQNDKTGEWE) are Extracellular-facing. The helical transmembrane segment at 143 to 163 (ISASWQIGLTLCYMAGEIVGL) threads the bilayer. The Cytoplasmic portion of the chain corresponds to 164–178 (QLTGPSVDLVGNRYT). Residues 179 to 199 (LIIALFFLAAFTFILYFCNSL) traverse the membrane as a helical segment. Position 200 (Gly200) is a topological domain, extracellular. The helical transmembrane segment at 201-221 (MIAVGQALCGMPWGCFQCLTV) threads the bilayer. Residues 222–234 (SYASEICPLALRY) lie on the Cytoplasmic side of the membrane. Residues 235–255 (YLTTYSNLCWLFGQLFAAGIM) traverse the membrane as a helical segment. At 256–270 (KNSQKKYADSELGYK) the chain is on the extracellular side. The helical transmembrane segment at 271-291 (LPFALQWILPVPLALGIFFAP) threads the bilayer. Residues 292–363 (ESPWWLVKKG…EDKINRRRTR (72 aa)) lie on the Cytoplasmic side of the membrane. Residues 364 to 384 (ITCLCWAGQATCGSILIGYST) traverse the membrane as a helical segment. Topologically, residues 385–397 (YFYEKAGVSTEMS) are extracellular. The helical transmembrane segment at 398 to 418 (FTFSIIQYCLGICATFLSWWA) threads the bilayer. At 419–426 (SKYFGRYD) the chain is on the cytoplasmic side. Residues 427–447 (LYAFGLAFQTIVFFIIGGLGC) traverse the membrane as a helical segment. At 448 to 459 (SSTHGSKMGSGS) the chain is on the extracellular side. The chain crosses the membrane as a helical span at residues 460–480 (LLMAVAFFYNLGIAPVVFCLV). Topologically, residues 481-492 (SEMPSSRLRTKT) are cytoplasmic. A helical membrane pass occupies residues 493–513 (IILARNTYNVVSIICSVLILY). Over 514–525 (QLNSKKWNWGAK) the chain is Extracellular. Residues 526–546 (SGFFWGVLCFCTLIWAVVDLP) form a helical membrane-spanning segment. Topologically, residues 547–609 (ETAGKTFVEI…QRNSNVSHHL (63 aa)) are cytoplasmic.

Belongs to the major facilitator superfamily. Sugar transporter (TC 2.A.1.1) family.

It localises to the cell membrane. Functionally, high-affinity uptake of maltose and maltotriose. Also transports alpha-methylglucoside, glucose and turanose but not melezitose or trehalose. This is Alpha-glucosides permease MPH2 (MPH2) from Saccharomyces cerevisiae (strain ATCC 204508 / S288c) (Baker's yeast).